The chain runs to 181 residues: Bradykinin potentiating and C-type natriuretic peptides (181 aa).

An N-terminal signal peptide occupies residues 1–23 (MFVSRLAASGLLLLALLAVSLDG). The propeptide occupies 24-27 (KPLQ). Residues Gln-28 and Gln-31 each carry the pyrrolidone carboxylic acid modification. Residues 41–43 (LVV) constitute a propeptide that is removed on maturation. At Gln-44 the chain carries Pyrrolidone carboxylic acid. Residues 50-52 (TQL) constitute a propeptide that is removed on maturation. A Pyrrolidone carboxylic acid modification is found at Gln-53. Residues 59 to 159 (AGGTTALREE…ARRLKGLAKK (101 aa)) constitute a propeptide that is removed on maturation. The disordered stretch occupies residues 74 to 150 (EAALDTPPAG…GGGCGGGGGA (77 aa)). Positions 104–114 (SKGASATSAAS) are enriched in low complexity. Residues 140 to 150 (AGGGCGGGGGA) are compositionally biased toward gly residues. Cys-165 and Cys-181 form a disulfide bridge.

The protein in the N-terminal section; belongs to the bradykinin-potentiating peptide family. This sequence in the C-terminal section; belongs to the natriuretic peptide family. As to expression, venom gland.

It is found in the secreted. Bradykinin-potentiating peptide both inhibits the activity of the angiotensin-converting enzyme (ACE) and enhances the action of bradykinin by inhibiting the peptidases that inactivate it. It acts as an indirect hypotensive agent. Synthetic Cdt1a, Cdt1b and the short hexapeptide Cdt3 are able to potentiate the hypotensive effect mediated by Bk on the blood pressure of anesthetized rats. In terms of biological role, has a vasorelaxant activity in rat aortic strips and a diuretic potency in anesthetized rats. May act by activating natriuretic receptors (NPR1 and/or NPR2). This Crotalus durissus terrificus (South American rattlesnake) protein is Bradykinin potentiating and C-type natriuretic peptides.